Here is a 672-residue protein sequence, read N- to C-terminus: DNA-directed RNA polymerase subunit gamma (672 aa).

The Zn(2+) site is built by Cys70, Cys72, Cys85, and Cys88. Positions 466, 468, and 470 each coordinate Mg(2+).

Belongs to the RNA polymerase beta' chain family. RpoC1 subfamily. In terms of assembly, in cyanobacteria the RNAP catalytic core is composed of 2 alpha, 1 beta, 1 beta', 1 gamma and 1 omega subunit. When a sigma factor is associated with the core the holoenzyme is formed, which can initiate transcription. Mg(2+) is required as a cofactor. Requires Zn(2+) as cofactor.

It catalyses the reaction RNA(n) + a ribonucleoside 5'-triphosphate = RNA(n+1) + diphosphate. In terms of biological role, DNA-dependent RNA polymerase catalyzes the transcription of DNA into RNA using the four ribonucleoside triphosphates as substrates. This Trichodesmium erythraeum (strain IMS101) protein is DNA-directed RNA polymerase subunit gamma.